The following is a 305-amino-acid chain: Ribonucleoside-diphosphate reductase small subunit (305 aa).

Fe cation is bound by residues Glu64, Glu94, and His97. Tyr101 is a catalytic residue. The helical transmembrane segment at 150–170 threads the bilayer; that stretch reads ILLFLLVEGIFFISSFFSIGL. Fe cation-binding residues include Glu157, Glu191, and His194.

The protein belongs to the ribonucleoside diphosphate reductase small chain family. Heterotetramer composed of a homodimer of the large subunit (R1) and a homodimer of the small subunit (R2). Larger multisubunit protein complex are also active, composed of (R1)n(R2)n. The cofactor is Fe cation.

Its subcellular location is the host membrane. The catalysed reaction is a 2'-deoxyribonucleoside 5'-diphosphate + [thioredoxin]-disulfide + H2O = a ribonucleoside 5'-diphosphate + [thioredoxin]-dithiol. Functionally, ribonucleoside-diphosphate reductase holoenzyme provides the precursors necessary for viral DNA synthesis. Allows virus growth in non-dividing cells, as well as reactivation from latency in infected hosts. Catalyzes the biosynthesis of deoxyribonucleotides from the corresponding ribonucleotides. The sequence is that of Ribonucleoside-diphosphate reductase small subunit from Saimiri sciureus (Common squirrel monkey).